The following is a 158-amino-acid chain: 6,7-dimethyl-8-ribityllumazine synthase (158 aa).

Residues Phe-22, 57-59 (AVE), and 81-83 (AVI) contribute to the 5-amino-6-(D-ribitylamino)uracil site. 86–87 (GT) provides a ligand contact to (2S)-2-hydroxy-3-oxobutyl phosphate. The active-site Proton donor is His-89. Phe-114 contributes to the 5-amino-6-(D-ribitylamino)uracil binding site. (2S)-2-hydroxy-3-oxobutyl phosphate is bound at residue Arg-128.

Belongs to the DMRL synthase family. In terms of assembly, forms an icosahedral capsid composed of 60 subunits, arranged as a dodecamer of pentamers.

The catalysed reaction is (2S)-2-hydroxy-3-oxobutyl phosphate + 5-amino-6-(D-ribitylamino)uracil = 6,7-dimethyl-8-(1-D-ribityl)lumazine + phosphate + 2 H2O + H(+). Its pathway is cofactor biosynthesis; riboflavin biosynthesis; riboflavin from 2-hydroxy-3-oxobutyl phosphate and 5-amino-6-(D-ribitylamino)uracil: step 1/2. Its function is as follows. Catalyzes the formation of 6,7-dimethyl-8-ribityllumazine by condensation of 5-amino-6-(D-ribitylamino)uracil with 3,4-dihydroxy-2-butanone 4-phosphate. This is the penultimate step in the biosynthesis of riboflavin. The protein is 6,7-dimethyl-8-ribityllumazine synthase of Shewanella frigidimarina (strain NCIMB 400).